Consider the following 625-residue polypeptide: ATP-dependent rRNA helicase spb4 (625 aa).

The Q motif signature appears at 14–42; the sequence is WDALTPSLAEWILDAIKSMGFEKMTPVQA. One can recognise a Helicase ATP-binding domain in the interval 45 to 246; the sequence is IPLFMGNKDV…RVGLRNPVKI (202 aa). 58 to 65 contributes to the ATP binding site; sequence AVTGSGKT. A DEAD box motif is present at residues 194-197; it reads DEAD. Residues 278–436 enclose the Helicase C-terminal domain; sequence ALLSLLSQLQ…TTDDAAKILI (159 aa). Positions 550 to 597 are disordered; sequence KKQREAWSQKHEKQDLKELKREKKKRKREIERLDKMTDEEKRVEQEKE. Composition is skewed to basic and acidic residues over residues 553 to 570 and 577 to 597; these read REAW…ELKR and REIE…QEKE. Residues 557-614 adopt a coiled-coil conformation; sequence SQKHEKQDLKELKREKKKRKREIERLDKMTDEEKRVEQEKERELQALIEQVKRRKIED.

It belongs to the DEAD box helicase family. DDX55/SPB4 subfamily. In terms of assembly, component of pre-60S ribosomal complexes.

Its subcellular location is the nucleus. The protein resides in the nucleolus. The catalysed reaction is ATP + H2O = ADP + phosphate + H(+). ATP-binding RNA helicase involved in the biogenesis of 60S ribosomal subunits. Binds 90S pre-ribosomal particles and dissociates from pre-60S ribosomal particles after processing of 27SB pre-rRNA. Required for the normal formation of 18S rRNA through the processing of pre-rRNAs at sites A0, A1 and A2, and the normal formation of 25S and 5.8S rRNAs through the processing of pre-rRNAs at sites C1 and C2. This is ATP-dependent rRNA helicase spb4 from Sclerotinia sclerotiorum (strain ATCC 18683 / 1980 / Ss-1) (White mold).